The primary structure comprises 194 residues: Fe/S biogenesis protein NfuA (194 aa).

[4Fe-4S] cluster contacts are provided by cysteine 152 and cysteine 155.

Belongs to the NfuA family. As to quaternary structure, homodimer. Requires [4Fe-4S] cluster as cofactor.

Functionally, involved in iron-sulfur cluster biogenesis. Binds a 4Fe-4S cluster, can transfer this cluster to apoproteins, and thereby intervenes in the maturation of Fe/S proteins. Could also act as a scaffold/chaperone for damaged Fe/S proteins. In Ectopseudomonas mendocina (strain ymp) (Pseudomonas mendocina), this protein is Fe/S biogenesis protein NfuA.